A 1424-amino-acid chain; its full sequence is DNA-directed RNA polymerase subunit beta' (1424 aa).

4 residues coordinate Zn(2+): Cys-60, Cys-62, Cys-75, and Cys-78. Residues Asp-449, Asp-451, and Asp-453 each coordinate Mg(2+). 4 residues coordinate Zn(2+): Cys-783, Cys-857, Cys-864, and Cys-867.

It belongs to the RNA polymerase beta' chain family. The RNAP catalytic core consists of 2 alpha, 1 beta, 1 beta' and 1 omega subunit. When a sigma factor is associated with the core the holoenzyme is formed, which can initiate transcription. Requires Mg(2+) as cofactor. It depends on Zn(2+) as a cofactor.

The catalysed reaction is RNA(n) + a ribonucleoside 5'-triphosphate = RNA(n+1) + diphosphate. Functionally, DNA-dependent RNA polymerase catalyzes the transcription of DNA into RNA using the four ribonucleoside triphosphates as substrates. In Treponema denticola (strain ATCC 35405 / DSM 14222 / CIP 103919 / JCM 8153 / KCTC 15104), this protein is DNA-directed RNA polymerase subunit beta'.